A 1193-amino-acid chain; its full sequence is Tubulin monoglutamylase TTLL4 (1193 aa).

Disordered stretches follow at residues 1–37 and 468–535; these read MASAGTEHYSIGLRRGNSFKQRHPSGTVSASPSEKPS and VHLD…CSSL. Positions 24-34 are enriched in polar residues; it reads PSGTVSASPSE. The segment covering 472–482 has biased composition (basic and acidic residues); the sequence is QPGKEPEEAKD. Positions 502-515 are enriched in acidic residues; the sequence is EPEDTEDELGDGLE. The region spanning 599–942 is the TTL domain; that stretch reads RRLLRWKMST…VLPNMEDIIS (344 aa). S686 is modified (phosphoserine). Residues K716, 722 to 723, 744 to 747, and 757 to 759 contribute to the ATP site; these read RG, QRYL, and KFD. R722 contributes to the a protein binding site. L-glutamate is bound at residue R783. 804 to 805 provides a ligand contact to ATP; the sequence is TN. L-glutamate contacts are provided by Y806, S807, and K828. The Mg(2+) site is built by D888, E901, and N903. Residues 913-1027 form a c-MTBD region region; that stretch reads PLDISIKGQM…RGQFERIFPS (115 aa). Residue K919 participates in L-glutamate binding. Positions 943–960 are enriched in low complexity; sequence SSSSPSSSSGSSTSLPSS. Disordered regions lie at residues 943–966 and 1092–1193; these read SSSSPSSSSGSSTSLPSSPRDKCQ and MTTS…AVSS. Polar residues-rich tracts occupy residues 1092–1102 and 1131–1153; these read MTTSKGDGTPN and SQAGLSPISRKTLSSRSNENTSK. Positions 1168-1182 are enriched in low complexity; it reads SGQSSRLSAASASQS. Residues 1183 to 1193 are compositionally biased toward polar residues; that stretch reads VTDSRLTAVSS.

This sequence belongs to the tubulin--tyrosine ligase family. Mg(2+) serves as cofactor. In terms of tissue distribution, highly expressed in testis. Expressed in brain, heart, kidney, liver, lung, muscle and spleen. In the brain, expressed in ependymal cilia, the cortex and the striatum. Expressed in blastomere.

It localises to the cytoplasm. The protein localises to the cell projection. It is found in the cilium. The protein resides in the cytoskeleton. Its subcellular location is the cilium basal body. The enzyme catalyses L-glutamyl-[protein] + L-glutamate + ATP = gamma-L-glutamyl-L-glutamyl-[protein] + ADP + phosphate + H(+). Functionally, monoglutamylase which modifies both tubulin and non-tubulin proteins, adding a single glutamate on the gamma-carboxyl group of specific glutamate residues of target proteins. Involved in the side-chain initiation step of the polyglutamylation reaction but not in the elongation step. Preferentially modifies beta-tail tubulin over the alpha-tubulin. Monoglutamylates nucleosome assembly proteins NAP1L1 and NAP1L4. Monoglutamylates nucleotidyltransferase CGAS, leading to inhibition of CGAS catalytic activity, thereby preventing antiviral defense function. Involved in KLF4 glutamylation which impedes its ubiquitination, thereby leading to somatic cell reprogramming, pluripotency maintenance and embryogenesis. This Mus musculus (Mouse) protein is Tubulin monoglutamylase TTLL4.